A 348-amino-acid chain; its full sequence is tRNA N6-adenosine threonylcarbamoyltransferase (348 aa).

2 residues coordinate Fe cation: histidine 116 and histidine 120. Substrate-binding positions include glutamine 138–glycine 142, aspartate 171, glycine 184, aspartate 188, and asparagine 277. Aspartate 309 lines the Fe cation pocket.

It belongs to the KAE1 / TsaD family. Requires Fe(2+) as cofactor.

The protein localises to the cytoplasm. The enzyme catalyses L-threonylcarbamoyladenylate + adenosine(37) in tRNA = N(6)-L-threonylcarbamoyladenosine(37) in tRNA + AMP + H(+). Its function is as follows. Required for the formation of a threonylcarbamoyl group on adenosine at position 37 (t(6)A37) in tRNAs that read codons beginning with adenine. Is involved in the transfer of the threonylcarbamoyl moiety of threonylcarbamoyl-AMP (TC-AMP) to the N6 group of A37, together with TsaE and TsaB. TsaD likely plays a direct catalytic role in this reaction. This is tRNA N6-adenosine threonylcarbamoyltransferase from Lactobacillus johnsonii (strain CNCM I-12250 / La1 / NCC 533).